A 148-amino-acid chain; its full sequence is MRLNDVKPQKGSKKRRRRVGRGISAGQGASAGLGMRGQKSRSGSGTRPGFEGGQQPLYRRIPKLKGFPVVNRKIYTTINVEKLADLPANTEVTLESLRASGILTAVKGPLKVLGNGDLGVALNVKAAAFTGQARSKIEAAGGSCEVLG.

Positions 1-57 are disordered; that stretch reads MRLNDVKPQKGSKKRRRRVGRGISAGQGASAGLGMRGQKSRSGSGTRPGFEGGQQPL. Residues 10–20 are compositionally biased toward basic residues; that stretch reads KGSKKRRRRVG. The segment covering 23-35 has biased composition (gly residues); that stretch reads ISAGQGASAGLGM.

The protein belongs to the universal ribosomal protein uL15 family. Part of the 50S ribosomal subunit.

Its function is as follows. Binds to the 23S rRNA. In Trichormus variabilis (strain ATCC 29413 / PCC 7937) (Anabaena variabilis), this protein is Large ribosomal subunit protein uL15.